The sequence spans 354 residues: Ferredoxin--NADP reductase, chloroplastic (354 aa).

A chloroplast-targeting transit peptide spans 1-35; the sequence is MASLRKPSNHADRACSRRLRVATRVAGRRMCRPVA. The region spanning 69-198 is the FAD-binding FR-type domain; it reads KAPFKAKVRS…TGPTGKVLLL (130 aa). N6,N6,N6-trimethyllysine is present on residues K118 and K124. Residues 130–133, 151–153, and Y157 contribute to the FAD site; these read RLYS and CVR. NADP(+)-binding residues include S133 and R153. K170 carries the N6,N6-dimethyllysine modification. FAD contacts are provided by residues 172–174 and T213; that span reads LCS. NADP(+)-binding positions include T213, 245-246, 275-276, K285, 313-314, and E352; these read VG, SR, and GL.

This sequence belongs to the ferredoxin--NADP reductase type 1 family. FAD is required as a cofactor.

It localises to the plastid. It is found in the chloroplast stroma. Its subcellular location is the chloroplast thylakoid membrane. It catalyses the reaction 2 reduced [2Fe-2S]-[ferredoxin] + NADP(+) + H(+) = 2 oxidized [2Fe-2S]-[ferredoxin] + NADPH. It functions in the pathway energy metabolism; photosynthesis. In terms of biological role, may play a key role in regulating the relative amounts of cyclic and non-cyclic electron flow to meet the demands of the plant for ATP and reducing power. The polypeptide is Ferredoxin--NADP reductase, chloroplastic (PETH) (Chlamydomonas reinhardtii (Chlamydomonas smithii)).